The chain runs to 240 residues: Large ribosomal subunit protein uL2 (240 aa).

The tract at residues 199–240 (DHPFGGGGRQHPGRPKSVSRDAAPGRKVGDIASKRTGRGGNE) is disordered. The span at 221-231 (APGRKVGDIAS) shows a compositional bias: basic and acidic residues.

The protein belongs to the universal ribosomal protein uL2 family. In terms of assembly, part of the 50S ribosomal subunit. Forms a bridge to the 30S subunit in the 70S ribosome.

Functionally, one of the primary rRNA binding proteins. Required for association of the 30S and 50S subunits to form the 70S ribosome, for tRNA binding and peptide bond formation. It has been suggested to have peptidyltransferase activity; this is somewhat controversial. Makes several contacts with the 16S rRNA in the 70S ribosome. The polypeptide is Large ribosomal subunit protein uL2 (Halobacterium salinarum (strain ATCC 29341 / DSM 671 / R1)).